The sequence spans 479 residues: UDP-glycosyltransferase 85A5 (479 aa).

UDP-alpha-D-glucose is bound by residues Ser-301, 358–360, 375–383, and 397–400; these read CPQ, HSGWNSTLE, and FAEQ.

It belongs to the UDP-glycosyltransferase family. In terms of tissue distribution, expressed in roots, shoots and leaves.

This Arabidopsis thaliana (Mouse-ear cress) protein is UDP-glycosyltransferase 85A5 (UGT85A5).